Reading from the N-terminus, the 239-residue chain is MVIKAQSPAGFAEEYIIESIWNNRFPPGSILPAERELSELIGVTRTTLREVLQRLARDGWLTIQHGKPTKINNFWETSGLNILETLARLDHDSVPQLIDNLLAVRTNIAAIFIRTALRHNPEKVRDVLTQANAVDDSAEAFAQLDYNVFRGLAFASGNPIYGLILNGLKGLYIRVGRYYFSNPEARKLAVNFYGRLEALRSEELYDQVMDVVRHYGKESGAIWHSMQSAIPRDIAEVRR.

An HTH gntR-type domain is found at 6–74 (QSPAGFAEEY…HGKPTKINNF (69 aa)). The H-T-H motif DNA-binding region spans 34 to 53 (ERELSELIGVTRTTLREVLQ).

In terms of assembly, homodimer.

It localises to the cytoplasm. In terms of biological role, multifunctional regulator of fatty acid metabolism. The polypeptide is Fatty acid metabolism regulator protein (Pectobacterium carotovorum subsp. carotovorum (strain PC1)).